The chain runs to 290 residues: Acetylglutamate kinase (290 aa).

Residues 65-66, Arg87, and Asn186 contribute to the substrate site; that span reads GG.

Belongs to the acetylglutamate kinase family. ArgB subfamily.

The protein resides in the cytoplasm. The enzyme catalyses N-acetyl-L-glutamate + ATP = N-acetyl-L-glutamyl 5-phosphate + ADP. It participates in amino-acid biosynthesis; L-arginine biosynthesis; N(2)-acetyl-L-ornithine from L-glutamate: step 2/4. Its function is as follows. Catalyzes the ATP-dependent phosphorylation of N-acetyl-L-glutamate. This is Acetylglutamate kinase from Mycobacterium sp. (strain JLS).